The primary structure comprises 201 residues: Glycerol-3-phosphate acyltransferase (201 aa).

5 helical membrane passes run 10–30 (ALIL…GIVI), 59–79 (PAAL…VLIA), 87–107 (AAQL…WLGF), 116–136 (FLGT…LTWL), and 161–181 (ILLG…LIFI).

Belongs to the PlsY family. As to quaternary structure, probably interacts with PlsX.

It localises to the cell inner membrane. The catalysed reaction is an acyl phosphate + sn-glycerol 3-phosphate = a 1-acyl-sn-glycero-3-phosphate + phosphate. Its pathway is lipid metabolism; phospholipid metabolism. Catalyzes the transfer of an acyl group from acyl-phosphate (acyl-PO(4)) to glycerol-3-phosphate (G3P) to form lysophosphatidic acid (LPA). This enzyme utilizes acyl-phosphate as fatty acyl donor, but not acyl-CoA or acyl-ACP. The polypeptide is Glycerol-3-phosphate acyltransferase (Cereibacter sphaeroides (strain ATCC 17029 / ATH 2.4.9) (Rhodobacter sphaeroides)).